A 517-amino-acid chain; its full sequence is Crotonobetaine/carnitine--CoA ligase (517 aa).

It belongs to the ATP-dependent AMP-binding enzyme family.

The enzyme catalyses 4-(trimethylamino)butanoate + ATP + CoA = 4-(trimethylamino)butanoyl-CoA + AMP + diphosphate. It carries out the reaction crotonobetaine + ATP + CoA = crotonobetainyl-CoA + AMP + diphosphate. The catalysed reaction is (R)-carnitine + ATP + CoA = (R)-carnitinyl-CoA + AMP + diphosphate. Its pathway is amine and polyamine metabolism; carnitine metabolism. Its function is as follows. Catalyzes the transfer of CoA to carnitine, generating the initial carnitinyl-CoA needed for the CaiB reaction cycle. Also has activity toward crotonobetaine and gamma-butyrobetaine. The protein is Crotonobetaine/carnitine--CoA ligase of Salmonella enteritidis PT4 (strain P125109).